The chain runs to 66 residues: Beta-toxin ChFII.9 (66 aa).

The LCN-type CS-alpha/beta domain maps to 1 to 66 (KEGYIVDYHT…VWPLPNKRCK (66 aa)). Intrachain disulfides connect C12-C65, C16-C41, C25-C46, and C29-C48. K66 is subject to Lysine amide.

Expressed by the venom gland.

It localises to the secreted. Beta toxins bind voltage independently at site-4 of sodium channels (Nav) and shift the activation voltage toward more negative potentials, thereby affecting sodium channel activation CC and promoting spontaneous and repetitive firing. The sequence is that of Beta-toxin ChFII.9 from Centruroides hirsutipalpus (Scorpion).